A 266-amino-acid polypeptide reads, in one-letter code: MGAAAAEADRTLFVGNLETKVTEELLFELFHQAGPVIKVKIPKDKDGKPKQFAFVNFKHEVSVPYAMNLLNGIKLYGRPIKIQFRSGSSHAPQDVSLSYPQHHVGNSSPTSTSPSRYERTMDNMTSSAQIIQRSFSSPENFQRQAVMNSALRQMSYGGKFGSSPLDQSGFSPSVQSHSHSFNQSSSSQWRQGTPSSQRKVRMNSYPYLADRHYSREQRYTDHGSDHHYRGKRDDFFYEDRNHDDWSHDYDNRRDSSRDGKWRSSRH.

Gly-2 carries the N-acetylglycine modification. The RRM domain maps to 10-87 (RTLFVGNLET…RPIKIQFRSG (78 aa)). 2 ZCCHC8 binding regions span residues 25–35 (LLFELFHQAGP) and 59–76 (HEVS…IKLY). Positions 90 to 115 (HAPQDVSLSYPQHHVGNSSPTSTSPS) are enriched in polar residues. A disordered region spans residues 90–118 (HAPQDVSLSYPQHHVGNSSPTSTSPSRYE). Ser-136 and Ser-137 each carry phosphoserine. Arg-152 carries the post-translational modification Omega-N-methylarginine. Positions 162–266 (SSPLDQSGFS…RDGKWRSSRH (105 aa)) are disordered. The segment covering 173 to 188 (SVQSHSHSFNQSSSSQ) has biased composition (low complexity). Ser-204 bears the Phosphoserine mark. The span at 209–266 (ADRHYSREQRYTDHGSDHHYRGKRDDFFYEDRNHDDWSHDYDNRRDSSRDGKWRSSRH) shows a compositional bias: basic and acidic residues.

Component of the nuclear exosome targeting (NEXT) complex composed of MTREX, ZCCHC8, and RBM7 that directs a subset of non-coding short-lived RNAs for exosomal degradation. Interacts with ZCCHC8 and SF3B2/SAP145. Binds to MTREX through ZCCHC8. Interacts with YWHAE and YWHAZ; these interactions are stress-dependent and RBM7 phosphorylation dependent; release RNA from the NEXT complex and may affect RNA targeting to the nuclear RNA exosomome for degradation. Interacts with MEPCE and LARP7, the core subunits of 7SK snRNP; upon genotoxic stress this interaction is enhanced, triggering the release of inactive P-TEFb complex from the core and P-TEFb complex activation. Phosphorylated at Ser-136 by MAPK14/p38-alpha-activated MAPKAPK2/MK2; this phosphorylation is stress-dependent; this phosphorylation decreases its RNA-binding capacity therefore affecting RNA nuclear exosome-mediated degradation. This phosphorylation mediates YWHAE and YWHAZ interactions. Ubiquitous.

The protein localises to the nucleus. The protein resides in the nucleoplasm. Its function is as follows. RNA-binding subunit of the trimeric nuclear exosome targeting (NEXT) complex, a complex that functions as an RNA exosome cofactor that directs a subset of non-coding short-lived RNAs for exosomal degradation. NEXT is involved in surveillance and turnover of aberrant transcripts and non-coding RNAs. Binds preferentially polyuridine sequences and associates with newly synthesized RNAs, including pre-mRNAs and short-lived exosome substrates such as promoter upstream transcripts (PROMPTs), enhancer RNAs (eRNAs), and 3'-extended products from small nuclear RNAs (snRNAs). Participates in several biological processes including DNA damage response (DDR) and stress response. During stress response, activation of the p38MAPK-MK2 pathway decreases RBM7-RNA-binding and subsequently the RNA exosome degradation activities, thereby modulating the turnover of non-coding transcriptome. Participates in DNA damage response (DDR), through its interaction with MEPCE and LARP7, the core subunits of 7SK snRNP complex, that release the positive transcription elongation factor b (P-TEFb) complex from the 7SK snRNP. In turn, activation of P-TEFb complex induces the transcription of P-TEFb-dependent DDR genes to promote cell viability. This chain is RNA-binding protein 7, found in Homo sapiens (Human).